Here is a 266-residue protein sequence, read N- to C-terminus: Undecaprenyl-diphosphatase (266 aa).

A run of 8 helical transmembrane segments spans residues 3 to 23, 41 to 61, 86 to 106, 108 to 128, 149 to 171, 184 to 204, 220 to 240, and 245 to 265; these read MSLL…FLPV, GTET…VVLY, VLVG…AIKA, LNTP…ILVI, FGVG…ATIM, AEYS…LALW, IGFV…LGVV, and FAPF…WLLA.

The protein belongs to the UppP family.

It is found in the cell inner membrane. The catalysed reaction is di-trans,octa-cis-undecaprenyl diphosphate + H2O = di-trans,octa-cis-undecaprenyl phosphate + phosphate + H(+). Functionally, catalyzes the dephosphorylation of undecaprenyl diphosphate (UPP). Confers resistance to bacitracin. In Rhizorhabdus wittichii (strain DSM 6014 / CCUG 31198 / JCM 15750 / NBRC 105917 / EY 4224 / RW1) (Sphingomonas wittichii), this protein is Undecaprenyl-diphosphatase.